The following is a 388-amino-acid chain: uncharacterized protein (388 aa).

The next 8 helical transmembrane spans lie at 15–37 (VISAFLSISLFEGFVILTLLLVL), 97–119 (GFSKIFPKLLLGISLILLPVVFY), 129–151 (PIWGGTFEVGFFYALFSITTFLL), 158–175 (FIYIPLFLLFLAVIFLSA), 179–196 (MMLAFFVIFYLILFVLFK), 203–225 (LAFWSVNFLIILSFIGGYVYLSQ), 304–326 (IFIVSEFIERGILGLLGILYIYF), and 347–369 (LLSVPLGLHLIQSVFTFFWDALL).

It is found in the cell membrane. This is an uncharacterized protein from Aquifex aeolicus (strain VF5).